The chain runs to 1532 residues: Multidrug resistance-associated protein 1 (1532 aa).

Topologically, residues 1-33 (MALSSFCSSDGSDPLWDWNVTWHTSNPDFTKCF) are extracellular. Asn19 carries N-linked (GlcNAc...) asparagine glycosylation. Residues 34–54 (QNTVLTWVPCFYLWSCFPLYF) traverse the membrane as a helical segment. Residues 55 to 74 (LYLSRHDRGYIQMTHLNKAK) lie on the Cytoplasmic side of the membrane. A helical membrane pass occupies residues 75–95 (TALGFFLWIICWADLFYSFWE). Over 96–100 (RSQGM) the chain is Extracellular. The helical transmembrane segment at 101 to 121 (LLAPVLLVSPTLLGITMLLAT) threads the bilayer. The Cytoplasmic portion of the chain corresponds to 122–133 (FLIQFERRKGVQ). The chain crosses the membrane as a helical span at residues 134–154 (SSGIMLTFWLVALLCALAILR). The Extracellular portion of the chain corresponds to 155–172 (SKIISALKKDAQVDMFRD). Residues 173–193 (SAFYLYFTLVFIQLVLSCFSD) traverse the membrane as a helical segment. Residues 194–317 (SSPLFSETVR…KDRDPSLFKV (124 aa)) are Cytoplasmic-facing. Phosphotyrosine is present on Tyr277. Phosphoserine is present on Ser290. Residues 318-338 (LYKTFGPYFLMSFLYKALHDL) form a helical membrane-spanning segment. An ABC transmembrane type-1 1 domain is found at 326–609 (FLMSFLYKAL…LPMVISSIVQ (284 aa)). Residues 339–364 (MMFAGPEILELIINFVNDREAPDWQG) are Extracellular-facing. The helical transmembrane segment at 365 to 385 (YLYTALLFVSACLQTLALHQY) threads the bilayer. The Cytoplasmic segment spans residues 386–441 (FHICFVTGMRIKTAVVGAVYRKALVITNSARKSSTVGEIVNLMSVDAQRFMDLATY). A helical transmembrane segment spans residues 442-462 (INMIWSAPLQVTLALYFLWLN). Residues 463–465 (LGP) lie on the Extracellular side of the membrane. Residues 466–486 (SVLAGVAVMILMVPFNAVMAM) form a helical membrane-spanning segment. Residues 487 to 548 (KTKTYQVAHM…VLKKSAYLAA (62 aa)) lie on the Cytoplasmic side of the membrane. The residue at position 504 (Lys504) is an N6-succinyllysine. The helical transmembrane segment at 549-569 (VGTFTWVCTPFLVALSTFAVF) threads the bilayer. The Extracellular portion of the chain corresponds to 570–591 (VTVDEKNILDAKKAFVSLALFN). The chain crosses the membrane as a helical span at residues 592 to 612 (ILRFPLNILPMVISSIVQASV). Residues 613–967 (SLKRLRIFLS…VKLSVYWNYM (355 aa)) lie on the Cytoplasmic side of the membrane. The ABC transporter 1 domain maps to 645 to 869 (ITVKNATFTW…DGAFAEFVRT (225 aa)). 679-686 (GQVGCGKS) lines the ATP pocket. Phosphoserine occurs at positions 879, 883, 916, and 931. The helical transmembrane segment at 968 to 988 (KAIGLCISFLSIFLFLCNHVS) threads the bilayer. Residues 975-1257 (SFLSIFLFLC…LVRMSSEMET (283 aa)) enclose the ABC transmembrane type-1 2 domain. Residues 989–1026 (ALASNYWLSLWTDDRPAVNGTQENRNFRLSVYGALGIL) are Extracellular-facing. Residues 1027–1047 (QGVAVFGYSMAVSIGGIFASR) form a helical membrane-spanning segment. The Cytoplasmic segment spans residues 1048 to 1090 (RLHLDLLQNVLRSPMSFFERTPSGNLVNRFSKELDTVDSMIPQ). The chain crosses the membrane as a helical span at residues 1091-1111 (VIKMFMGSLFSVIGAVIIILL). A topological domain (extracellular) is located at residue Ala1112. Residues 1113-1133 (TPIAAVIIPPLGLVYFFVQRF) form a helical membrane-spanning segment. The Cytoplasmic segment spans residues 1134-1204 (YVASSRQLKR…VANRWLAVRL (71 aa)). A helical transmembrane segment spans residues 1205-1225 (ECVGNCIVLFAALFAVISRHS). Topologically, residues 1226–1227 (LS) are extracellular. A helical membrane pass occupies residues 1228–1248 (AGLVGLSVSYSLQITAYLNWL). At 1249–1532 (VRMSSEMETN…YSMAKDAGLV (284 aa)) the chain is on the cytoplasmic side. One can recognise an ABC transporter 2 domain in the interval 1294-1528 (VEFRDYCLRY…RGVFYSMAKD (235 aa)). 1328–1335 (GRTGAGKS) contacts ATP.

It belongs to the ABC transporter superfamily. ABCC family. Conjugate transporter (TC 3.A.1.208) subfamily. Glycosylated. As to expression, skeletal muscle, brain, heart, spleen, lung and kidney.

The protein localises to the cell membrane. It is found in the basolateral cell membrane. The catalysed reaction is ATP + H2O + xenobioticSide 1 = ADP + phosphate + xenobioticSide 2.. It catalyses the reaction an S-substituted glutathione(in) + ATP + H2O = an S-substituted glutathione(out) + ADP + phosphate + H(+). It carries out the reaction sphing-4-enine 1-phosphate(in) + ATP + H2O = sphing-4-enine 1-phosphate(out) + ADP + phosphate + H(+). The enzyme catalyses leukotriene C4(in) + ATP + H2O = leukotriene C4(out) + ADP + phosphate + H(+). The catalysed reaction is 17beta-estradiol 17-O-(beta-D-glucuronate)(in) + ATP + H2O = 17beta-estradiol 17-O-(beta-D-glucuronate)(out) + ADP + phosphate + H(+). It catalyses the reaction daunorubicin(in) + ATP + H2O = daunorubicin(out) + ADP + phosphate + H(+). It carries out the reaction vincristine(in) + ATP + H2O = vincristine(out) + ADP + phosphate + H(+). The enzyme catalyses 2',3'-cGAMP(in) + ATP + H2O = 2',3'-cGAMP(out) + ADP + phosphate + H(+). The catalysed reaction is S-[(2E,6E,10E)-geranylgeranyl]-L-glutathione(in) + ATP + H2O = S-[(2E,6E,10E)-geranylgeranyl]-L-glutathione(out) + ADP + phosphate + H(+). It catalyses the reaction prostaglandin A2-S-(R)-glutathione(in) + ATP + H2O = prostaglandin A2-S-(R)-glutathione(out) + ADP + phosphate + H(+). It carries out the reaction prostaglandin A2-S-(S)-glutathione(in) + ATP + H2O = prostaglandin A2-S-(S)-glutathione(out) + ADP + phosphate + H(+). Its activity is regulated as follows. MK 571 inhibits sphingosine 1-phosphate and leukotriene C4 export. Mediates export of organic anions and drugs from the cytoplasm. Mediates ATP-dependent transport of glutathione and glutathione conjugates, leukotriene C4, estradiol-17-beta-o-glucuronide, methotrexate, antiviral drugs and other xenobiotics. Confers resistance to anticancer drugs by decreasing accumulation of drug in cells, and by mediating ATP- and GSH-dependent drug export. Hydrolyzes ATP with low efficiency. Catalyzes the export of sphingosine 1-phosphate from mast cells independently of their degranulation. Participates in inflammatory response by allowing export of leukotriene C4 from leukotriene C4-synthesizing cells. Exports S-geranylgeranyl-glutathione (GGG) in lymphoid cells and stromal compartments of lymphoid organs. ABCC1 (via extracellular transport) with GGT5 (via GGG catabolism) establish GGG gradients within lymphoid tissues to position P2RY8-positive lymphocytes at germinal centers in lymphoid follicles and restrict their chemotactic transmigration from blood vessels to the bone marrow parenchyma. Mediates basolateral export of GSH-conjugated R- and S-prostaglandin A2 diastereomers in polarized epithelial cells. The protein is Multidrug resistance-associated protein 1 of Rattus norvegicus (Rat).